We begin with the raw amino-acid sequence, 217 residues long: Protein 33K (217 aa).

The disordered stretch occupies residues 1–142 (MPPKGNKQAI…KEKTSAIATR (142 aa)). Over residues 24-68 (QWDEEEESWDDSQAEEVSDEEEMESWESLDEELEDKPPKDEEEEI) the composition is skewed to acidic residues. Over residues 69–78 (IASAAAPSSK) the composition is skewed to low complexity. The segment covering 123–136 (KRSEKTTRPRKEKT) has biased composition (basic and acidic residues). Positions 160–187 (YAIFQQSRGQQLELKVKNRSLRSLTRSC) are necessary for nuclear subcellular location. The segment at 166–186 (SRGQQLELKVKNRSLRSLTRS) is RS-repeat; required for splicing enhancer activity.

The protein belongs to the adenoviridae splicing factor family. In terms of assembly, homooligomer. Interacts with DBP; this interaction occurs at a unique vertex during genome packaging. Interacts with IVa2; this interaction occurs at a unique vertex during genome packaging and seems to potentiate IVa2 and 33K oligomerization. Post-translationally, phosphorylated in vitro by human PKA and PRKDC. PRKDC inhibits, whereas PKA activates the splicing factor.

It is found in the host nucleus. Promotes alternative splicing of late transcripts by promoting splicing at weak 3' splice sites. Required for the temporal activation of major late pre-mRNA splicing at late times of infection. Induces the splicing and expression of the late capsid vertex protein. Functionally, probably functions as the small terminase that is part of the molecular motor that translocates genomic DNA in empty capsid during DNA packaging. This motor is located at a unique vertex and comprises at least the IVa2 ATPase, the small terminase 33K and probably a portal. Forms a ring-like structure of about 17 nm in which genomic DNA is translocated into the capsid. Stimulates IVa2 ATPase activity in the presence of the viral genome. Once the DNA is packaged, the terminase detaches: the 33K protein is present in the empty particles, but not in the mature virions. Also involved in virion assembly. This is Protein 33K from Human adenovirus F serotype 41 (HAdV-41).